Consider the following 250-residue polypeptide: Triosephosphate isomerase (250 aa).

9-11 provides a ligand contact to substrate; sequence NWK. Histidine 100 serves as the catalytic Electrophile. Glutamate 169 acts as the Proton acceptor in catalysis. Substrate contacts are provided by residues glycine 175, serine 208, and 229–230; that span reads GG.

It belongs to the triosephosphate isomerase family. In terms of assembly, homodimer.

It is found in the cytoplasm. It carries out the reaction D-glyceraldehyde 3-phosphate = dihydroxyacetone phosphate. Its pathway is carbohydrate biosynthesis; gluconeogenesis. The protein operates within carbohydrate degradation; glycolysis; D-glyceraldehyde 3-phosphate from glycerone phosphate: step 1/1. Functionally, involved in the gluconeogenesis. Catalyzes stereospecifically the conversion of dihydroxyacetone phosphate (DHAP) to D-glyceraldehyde-3-phosphate (G3P). The sequence is that of Triosephosphate isomerase from Synechococcus sp. (strain JA-2-3B'a(2-13)) (Cyanobacteria bacterium Yellowstone B-Prime).